Consider the following 263-residue polypeptide: Thiazole synthase (263 aa).

The active-site Schiff-base intermediate with DXP is the Lys100. 1-deoxy-D-xylulose 5-phosphate contacts are provided by residues Gly161, 187 to 188 (AG), and 209 to 210 (NT).

This sequence belongs to the ThiG family. In terms of assembly, homotetramer. Forms heterodimers with either ThiH or ThiS.

It localises to the cytoplasm. It catalyses the reaction [ThiS sulfur-carrier protein]-C-terminal-Gly-aminoethanethioate + 2-iminoacetate + 1-deoxy-D-xylulose 5-phosphate = [ThiS sulfur-carrier protein]-C-terminal Gly-Gly + 2-[(2R,5Z)-2-carboxy-4-methylthiazol-5(2H)-ylidene]ethyl phosphate + 2 H2O + H(+). The protein operates within cofactor biosynthesis; thiamine diphosphate biosynthesis. Its function is as follows. Catalyzes the rearrangement of 1-deoxy-D-xylulose 5-phosphate (DXP) to produce the thiazole phosphate moiety of thiamine. Sulfur is provided by the thiocarboxylate moiety of the carrier protein ThiS. In vitro, sulfur can be provided by H(2)S. The sequence is that of Thiazole synthase from Shouchella clausii (strain KSM-K16) (Alkalihalobacillus clausii).